The primary structure comprises 193 residues: ATP synthase subunit b (193 aa).

The helical transmembrane segment at 35-55 (IPMMLATFIAFVIVFLLLFFF) threads the bilayer.

This sequence belongs to the ATPase B chain family. As to quaternary structure, F-type ATPases have 2 components, F(1) - the catalytic core - and F(0) - the membrane proton channel. F(1) has five subunits: alpha(3), beta(3), gamma(1), delta(1), epsilon(1). F(0) has three main subunits: a(1), b(2) and c(10-14). The alpha and beta chains form an alternating ring which encloses part of the gamma chain. F(1) is attached to F(0) by a central stalk formed by the gamma and epsilon chains, while a peripheral stalk is formed by the delta and b chains.

The protein localises to the cell membrane. F(1)F(0) ATP synthase produces ATP from ADP in the presence of a proton or sodium gradient. F-type ATPases consist of two structural domains, F(1) containing the extramembraneous catalytic core and F(0) containing the membrane proton channel, linked together by a central stalk and a peripheral stalk. During catalysis, ATP synthesis in the catalytic domain of F(1) is coupled via a rotary mechanism of the central stalk subunits to proton translocation. Functionally, component of the F(0) channel, it forms part of the peripheral stalk, linking F(1) to F(0). The chain is ATP synthase subunit b from Mycoplasmopsis synoviae (strain 53) (Mycoplasma synoviae).